We begin with the raw amino-acid sequence, 72 residues long: Disintegrin batroxostatin (72 aa).

Residues Glu-1–Tyr-72 form the Disintegrin domain. Intrachain disulfides connect Cys-6–Cys-21, Cys-8–Cys-16, Cys-15–Cys-38, Cys-29–Cys-35, Cys-34–Cys-59, and Cys-47–Cys-66. A Cell attachment site motif is present at residues Arg-51–Asp-53. A disordered region spans residues Gly-52–Tyr-72.

Belongs to the venom metalloproteinase (M12B) family. P-II subfamily. P-IIa sub-subfamily. In terms of assembly, monomer. In terms of tissue distribution, expressed by the venom gland.

The protein resides in the secreted. Its function is as follows. Inhibits fibrinogen interaction with platelets. Acts by binding to the glycoprotein IIb-IIIa receptor (ITGA2B/ITGB3) on the platelet surface and inhibits aggregation induced by ADP, thrombin, platelet-activating factor and collagen. Also inhibits T24 and SK-Mel-28 cell adhesion to fibronectin with IC(50) of 4.4 uM and 33 nM, respectively. This chain is Disintegrin batroxostatin, found in Bothrops atrox (Barba amarilla).